The primary structure comprises 348 residues: Dihydroorotase (348 aa).

2 residues coordinate Zn(2+): His17 and His19. Residues 19–21 and Asn45 each bind substrate; that span reads HLR. Positions 103, 140, and 178 each coordinate Zn(2+). Lys103 carries the post-translational modification N6-carboxylysine. Substrate is bound at residue His140. Leu223 lines the substrate pocket. Residue Asp251 coordinates Zn(2+). Residue Asp251 is part of the active site. The substrate site is built by His255 and Ala267.

Belongs to the metallo-dependent hydrolases superfamily. DHOase family. Class II DHOase subfamily. As to quaternary structure, homodimer. Requires Zn(2+) as cofactor.

It catalyses the reaction (S)-dihydroorotate + H2O = N-carbamoyl-L-aspartate + H(+). It functions in the pathway pyrimidine metabolism; UMP biosynthesis via de novo pathway; (S)-dihydroorotate from bicarbonate: step 3/3. Its function is as follows. Catalyzes the reversible cyclization of carbamoyl aspartate to dihydroorotate. The chain is Dihydroorotase from Cronobacter sakazakii (strain ATCC BAA-894) (Enterobacter sakazakii).